A 471-amino-acid chain; its full sequence is Siroheme synthase 1 (471 aa).

The precorrin-2 dehydrogenase /sirohydrochlorin ferrochelatase stretch occupies residues 1 to 203 (MDYLPLFAEL…GNSAEAEKAL (203 aa)). NAD(+) is bound by residues 22–23 (EI) and 43–44 (ET). Ser128 is modified (phosphoserine). The interval 215 to 471 (GEIILVGAGP…GFNASVVNLA (257 aa)) is uroporphyrinogen-III C-methyltransferase. Pro224 lines the S-adenosyl-L-methionine pocket. Asp247 acts as the Proton acceptor in catalysis. Lys269 serves as the catalytic Proton donor. S-adenosyl-L-methionine contacts are provided by residues 300-302 (GGD), Ile305, 330-331 (TA), Met382, and Gly411.

This sequence in the N-terminal section; belongs to the precorrin-2 dehydrogenase / sirohydrochlorin ferrochelatase family. In the C-terminal section; belongs to the precorrin methyltransferase family.

The catalysed reaction is uroporphyrinogen III + 2 S-adenosyl-L-methionine = precorrin-2 + 2 S-adenosyl-L-homocysteine + H(+). It catalyses the reaction precorrin-2 + NAD(+) = sirohydrochlorin + NADH + 2 H(+). The enzyme catalyses siroheme + 2 H(+) = sirohydrochlorin + Fe(2+). It participates in cofactor biosynthesis; adenosylcobalamin biosynthesis; precorrin-2 from uroporphyrinogen III: step 1/1. It functions in the pathway cofactor biosynthesis; adenosylcobalamin biosynthesis; sirohydrochlorin from precorrin-2: step 1/1. Its pathway is porphyrin-containing compound metabolism; siroheme biosynthesis; precorrin-2 from uroporphyrinogen III: step 1/1. The protein operates within porphyrin-containing compound metabolism; siroheme biosynthesis; siroheme from sirohydrochlorin: step 1/1. It participates in porphyrin-containing compound metabolism; siroheme biosynthesis; sirohydrochlorin from precorrin-2: step 1/1. Multifunctional enzyme that catalyzes the SAM-dependent methylations of uroporphyrinogen III at position C-2 and C-7 to form precorrin-2 via precorrin-1. Then it catalyzes the NAD-dependent ring dehydrogenation of precorrin-2 to yield sirohydrochlorin. Finally, it catalyzes the ferrochelation of sirohydrochlorin to yield siroheme. The polypeptide is Siroheme synthase 1 (Klebsiella pneumoniae subsp. pneumoniae (strain ATCC 700721 / MGH 78578)).